A 115-amino-acid polypeptide reads, in one-letter code: uncharacterized protein (115 aa).

The next 3 helical transmembrane spans lie at 23 to 43, 63 to 83, and 90 to 110; these read LVYA…LFFA, AMVT…VVMV, and NVVI…YVAA.

It localises to the cell membrane. This is an uncharacterized protein from Mycobacterium bovis (strain ATCC BAA-935 / AF2122/97).